The primary structure comprises 93 residues: uncharacterized protein (93 aa).

The 62-residue stretch at 24–85 (QLQVGDTLKL…IQTQVGRLFF (62 aa)) folds into the TRAM domain.

Belongs to the ycf81 family.

This is an uncharacterized protein from Thermus thermophilus.